A 449-amino-acid polypeptide reads, in one-letter code: MTTRILTGITTTGTPHLGNYAGAIRPAIVASRQSDVDSFYFLADYHALIKCDDPLRIQRSRLEIAATWLAAGLDVDRVTFYRQSDIPEIPELTWLLTCVAAKGLLNRAHAYKASVDKNVESCEDPDAGITMGLYSYPVLMAADILMFNAHQVPVGRDQIQHVEMARDIGQRFNHLFGKGREFFVMPEALIEESVATLPGLDGRKMSKSYDNTIPLFSSAKDMKSAISRIVTDSLAPGEAKDPDNSHLFTLYQAFSTPEQCAQFRSELLQGLGWGEAKTRMFTLLDEQLGEAREQYLSLIERPADLEDILLAGAQKARRVATPFLEELREAVGLRSFRTAVQNADTGKKKTTKGARFVSFREDDGSFRFRLLAADGEQLLLSRTFADGKAAGIVSKQLQQGGELDLRSEADRFTLWLNGECVADSPVFADATARDNAVETLKLALAPQQD.

ATP contacts are provided by residues 10 to 12 (TTT) and 18 to 19 (GN). Positions 11–19 (TTGTPHLGN) match the 'HIGH' region motif. L-tryptophan is bound at residue Asp143. Residues 155–157 (GRD), Leu197, and 204–208 (KMSKS) contribute to the ATP site. A 'KMSKS' region motif is present at residues 204–208 (KMSKS).

Belongs to the class-I aminoacyl-tRNA synthetase family. In terms of assembly, homodimer.

The protein resides in the cytoplasm. The catalysed reaction is tRNA(Trp) + L-tryptophan + ATP = L-tryptophyl-tRNA(Trp) + AMP + diphosphate + H(+). In terms of biological role, catalyzes the attachment of tryptophan to tRNA(Trp). In Pseudomonas syringae pv. tomato (strain ATCC BAA-871 / DC3000), this protein is Tryptophan--tRNA ligase.